The primary structure comprises 561 residues: Oligo-1,6-glucosidase (561 aa).

Aspartate 199 serves as the catalytic Nucleophile. The Proton donor role is filled by glutamate 256.

The protein belongs to the glycosyl hydrolase 13 family.

The protein localises to the cytoplasm. It carries out the reaction Hydrolysis of (1-&gt;6)-alpha-D-glucosidic linkages in some oligosaccharides produced from starch and glycogen by alpha-amylase, and in isomaltose.. The protein is Oligo-1,6-glucosidase (malL) of Halalkalibacterium halodurans (strain ATCC BAA-125 / DSM 18197 / FERM 7344 / JCM 9153 / C-125) (Bacillus halodurans).